A 657-amino-acid chain; its full sequence is Glycogen debranching enzyme (657 aa).

Asp336 acts as the Nucleophile in catalysis. The active-site Proton donor is the Glu371. Residues 458–467 show a composition bias toward basic and acidic residues; it reads NEANGEENRD. The segment at 458 to 479 is disordered; it reads NEANGEENRDGTNNNYSNNHGK.

It belongs to the glycosyl hydrolase 13 family.

The enzyme catalyses Hydrolysis of (1-&gt;6)-alpha-D-glucosidic linkages to branches with degrees of polymerization of three or four glucose residues in limit dextrin.. The protein operates within glycan degradation; glycogen degradation. Functionally, removes maltotriose and maltotetraose chains that are attached by 1,6-alpha-linkage to the limit dextrin main chain, generating a debranched limit dextrin. This chain is Glycogen debranching enzyme, found in Escherichia coli O139:H28 (strain E24377A / ETEC).